A 61-amino-acid polypeptide reads, in one-letter code: Alpha-conotoxine-like Am1.3 (61 aa).

A signal peptide spans 1 to 21 (MGMRMMFTVFLLVVLATTVVS). The propeptide occupies 22-44 (FMSGRASHGRNAAASDLIALTIK). Cys60 bears the Cysteine amide mark.

Belongs to the conotoxin A superfamily. In terms of processing, is not hydroxylated. Post-translationally, contains 2 disulfide bonds. As to expression, expressed by the venom duct.

Its subcellular location is the secreted. In terms of biological role, alpha-conotoxins act on postsynaptic membranes, they bind to the nicotinic acetylcholine receptors (nAChR) and thus inhibit them. The polypeptide is Alpha-conotoxine-like Am1.3 (Conus amadis (Amadis cone)).